The chain runs to 185 residues: Transcription factor FapR (185 aa).

The protein belongs to the FapR family.

Functionally, transcriptional factor involved in regulation of membrane lipid biosynthesis by repressing genes involved in fatty acid and phospholipid metabolism. The chain is Transcription factor FapR from Staphylococcus aureus (strain Mu3 / ATCC 700698).